The following is a 33-amino-acid chain: Mu/delta-theraphotoxin-Pm2a (33 aa).

Disulfide bonds link C2–C16, C9–C21, and C15–C27. F33 bears the Phenylalanine amide mark.

As to expression, expressed by the venom gland.

It is found in the secreted. Its function is as follows. Gating-modifier toxin with very weak activity on Nav1.7/SCN9A and Nav1.8/SCN10A. Shows 22% peak current inhibition (at 10 uM) on Nav1.8/SCN10A sodium channels. Show peak current inhibition and delays fast inactivation on Nav1.7/SCN9A (EC(50)&gt;10 uM). The polypeptide is Mu/delta-theraphotoxin-Pm2a (Poecilotheria metallica (Metallic blue ornamental tree spider)).